We begin with the raw amino-acid sequence, 188 residues long: UPF0157 protein DR_2534 (188 aa).

The segment covering 1-12 (MGRGGRGVGGGR) has biased composition (gly residues). The tract at residues 1 to 37 (MGRGGRGVGGGRPEGHGASVEGGRTRQTEGMDLISPD) is disordered.

Belongs to the UPF0157 (GrpB) family.

This is UPF0157 protein DR_2534 from Deinococcus radiodurans (strain ATCC 13939 / DSM 20539 / JCM 16871 / CCUG 27074 / LMG 4051 / NBRC 15346 / NCIMB 9279 / VKM B-1422 / R1).